A 221-amino-acid polypeptide reads, in one-letter code: Cytidylate kinase (221 aa).

An ATP-binding site is contributed by glycine 11–threonine 19.

The protein belongs to the cytidylate kinase family. Type 1 subfamily.

It is found in the cytoplasm. It carries out the reaction CMP + ATP = CDP + ADP. The catalysed reaction is dCMP + ATP = dCDP + ADP. In Mycoplasmopsis pulmonis (strain UAB CTIP) (Mycoplasma pulmonis), this protein is Cytidylate kinase.